Here is a 313-residue protein sequence, read N- to C-terminus: Ribosomal RNA small subunit methyltransferase H (313 aa).

Residues glycine 35–histidine 37, aspartate 55, phenylalanine 79, aspartate 100, and glutamine 107 each bind S-adenosyl-L-methionine.

It belongs to the methyltransferase superfamily. RsmH family.

It is found in the cytoplasm. The catalysed reaction is cytidine(1402) in 16S rRNA + S-adenosyl-L-methionine = N(4)-methylcytidine(1402) in 16S rRNA + S-adenosyl-L-homocysteine + H(+). In terms of biological role, specifically methylates the N4 position of cytidine in position 1402 (C1402) of 16S rRNA. The polypeptide is Ribosomal RNA small subunit methyltransferase H (Burkholderia ambifaria (strain ATCC BAA-244 / DSM 16087 / CCUG 44356 / LMG 19182 / AMMD) (Burkholderia cepacia (strain AMMD))).